The chain runs to 443 residues: ATP-dependent protease ATPase subunit HslU (443 aa).

Residues I18, 60 to 65 (GVGKTE), D256, E321, and R393 each bind ATP.

It belongs to the ClpX chaperone family. HslU subfamily. As to quaternary structure, a double ring-shaped homohexamer of HslV is capped on each side by a ring-shaped HslU homohexamer. The assembly of the HslU/HslV complex is dependent on binding of ATP.

It localises to the cytoplasm. Functionally, ATPase subunit of a proteasome-like degradation complex; this subunit has chaperone activity. The binding of ATP and its subsequent hydrolysis by HslU are essential for unfolding of protein substrates subsequently hydrolyzed by HslV. HslU recognizes the N-terminal part of its protein substrates and unfolds these before they are guided to HslV for hydrolysis. In Wigglesworthia glossinidia brevipalpis, this protein is ATP-dependent protease ATPase subunit HslU.